Consider the following 77-residue polypeptide: Acyl carrier protein (77 aa).

A Carrier domain is found at 2–77; it reads ADVLERVTKI…DAVNYIKSRL (76 aa). Position 37 is an O-(pantetheine 4'-phosphoryl)serine (S37).

It belongs to the acyl carrier protein (ACP) family. In terms of processing, 4'-phosphopantetheine is transferred from CoA to a specific serine of apo-ACP by AcpS. This modification is essential for activity because fatty acids are bound in thioester linkage to the sulfhydryl of the prosthetic group.

The protein localises to the cytoplasm. Its pathway is lipid metabolism; fatty acid biosynthesis. Functionally, carrier of the growing fatty acid chain in fatty acid biosynthesis. In Geobacillus kaustophilus (strain HTA426), this protein is Acyl carrier protein.